We begin with the raw amino-acid sequence, 205 residues long: Holliday junction branch migration complex subunit RuvA (205 aa).

Positions 1-67 (MIGWLKGDVQ…ADNLQLFGFL (67 aa)) are domain I. The segment at 68–146 (QLAERDLFRE…DSVASTGPER (79 aa)) is domain II. A flexible linker region spans residues 147 to 155 (NQLDPVAPD). The domain III stretch occupies residues 155 to 205 (DLIATLETLGFETHEIRDALQRLNGMGGPQDGDDDDAWLRACIKLMSSTDP).

The protein belongs to the RuvA family. As to quaternary structure, homotetramer. Forms an RuvA(8)-RuvB(12)-Holliday junction (HJ) complex. HJ DNA is sandwiched between 2 RuvA tetramers; dsDNA enters through RuvA and exits via RuvB. An RuvB hexamer assembles on each DNA strand where it exits the tetramer. Each RuvB hexamer is contacted by two RuvA subunits (via domain III) on 2 adjacent RuvB subunits; this complex drives branch migration. In the full resolvosome a probable DNA-RuvA(4)-RuvB(12)-RuvC(2) complex forms which resolves the HJ.

The protein resides in the cytoplasm. In terms of biological role, the RuvA-RuvB-RuvC complex processes Holliday junction (HJ) DNA during genetic recombination and DNA repair, while the RuvA-RuvB complex plays an important role in the rescue of blocked DNA replication forks via replication fork reversal (RFR). RuvA specifically binds to HJ cruciform DNA, conferring on it an open structure. The RuvB hexamer acts as an ATP-dependent pump, pulling dsDNA into and through the RuvAB complex. HJ branch migration allows RuvC to scan DNA until it finds its consensus sequence, where it cleaves and resolves the cruciform DNA. This Parasynechococcus marenigrum (strain WH8102) protein is Holliday junction branch migration complex subunit RuvA.